The chain runs to 337 residues: tRNA N6-adenosine threonylcarbamoyltransferase (337 aa).

Residues H111 and H115 each coordinate Fe cation. Residues L134–G138, D167, G180, and N272 contribute to the substrate site. D300 contributes to the Fe cation binding site.

This sequence belongs to the KAE1 / TsaD family. Fe(2+) is required as a cofactor.

Its subcellular location is the cytoplasm. It catalyses the reaction L-threonylcarbamoyladenylate + adenosine(37) in tRNA = N(6)-L-threonylcarbamoyladenosine(37) in tRNA + AMP + H(+). In terms of biological role, required for the formation of a threonylcarbamoyl group on adenosine at position 37 (t(6)A37) in tRNAs that read codons beginning with adenine. Is involved in the transfer of the threonylcarbamoyl moiety of threonylcarbamoyl-AMP (TC-AMP) to the N6 group of A37, together with TsaE and TsaB. TsaD likely plays a direct catalytic role in this reaction. This is tRNA N6-adenosine threonylcarbamoyltransferase from Klebsiella pneumoniae (strain 342).